A 319-amino-acid polypeptide reads, in one-letter code: Putative ribose-phosphate pyrophosphokinase 2 (319 aa).

ATP is bound by residues Asp40 to Glu42 and Arg99 to Gln100. A Mg(2+)-binding site is contributed by His133. D-ribose 5-phosphate-binding positions include Asp222 and Asn226–Thr230.

Belongs to the ribose-phosphate pyrophosphokinase family. Class I subfamily. In terms of assembly, homohexamer. Requires Mg(2+) as cofactor.

The protein localises to the cytoplasm. The enzyme catalyses D-ribose 5-phosphate + ATP = 5-phospho-alpha-D-ribose 1-diphosphate + AMP + H(+). It functions in the pathway metabolic intermediate biosynthesis; 5-phospho-alpha-D-ribose 1-diphosphate biosynthesis; 5-phospho-alpha-D-ribose 1-diphosphate from D-ribose 5-phosphate (route I): step 1/1. Functionally, involved in the biosynthesis of the central metabolite phospho-alpha-D-ribosyl-1-pyrophosphate (PRPP) via the transfer of pyrophosphoryl group from ATP to 1-hydroxyl of ribose-5-phosphate (Rib-5-P). This is Putative ribose-phosphate pyrophosphokinase 2 from Streptococcus pneumoniae serotype 4 (strain ATCC BAA-334 / TIGR4).